The primary structure comprises 42 residues: Beta-2-microglobulin (42 aa).

The Ig-like C1-type domain occupies 5 to 42; it reads PKIQVYSRHPAZBGKPBFLBCYVSGFHPXZIZIBLLKB.

In terms of assembly, heterodimer of an alpha chain and a beta chain. Beta-2-microglobulin is the beta-chain of major histocompatibility complex class I molecules.

The protein resides in the secreted. Its function is as follows. Component of the class I major histocompatibility complex (MHC). Involved in the presentation of peptide antigens to the immune system. This is Beta-2-microglobulin (B2M) from Canis lupus familiaris (Dog).